A 363-amino-acid chain; its full sequence is Protein RecA (363 aa).

79-86 serves as a coordination point for ATP; that stretch reads GPESSGKT.

Belongs to the RecA family.

It localises to the cytoplasm. Can catalyze the hydrolysis of ATP in the presence of single-stranded DNA, the ATP-dependent uptake of single-stranded DNA by duplex DNA, and the ATP-dependent hybridization of homologous single-stranded DNAs. It interacts with LexA causing its activation and leading to its autocatalytic cleavage. This Borrelia turicatae (strain 91E135) protein is Protein RecA.